Reading from the N-terminus, the 339-residue chain is RNA polymerase principal sigma factor HrdC (339 aa).

Residues 1 to 10 (MAPTARTPTA) are compositionally biased toward low complexity. Disordered regions lie at residues 1–37 (MAPTARTPTARTRDDRRATTRTARLRTRIPEPDEEPD) and 71–101 (REELETADTGEPAPTPRRRRTLEETVHDGQE). Basic and acidic residues predominate over residues 91-101 (TLEETVHDGQE). The Polymerase core binding motif lies at 130 to 143 (DVIQEGNLGLIRAV). A DNA-binding region (H-T-H motif) is located at residues 300–319 (LQQVAQHVGLTRERVRQLEK).

This sequence belongs to the sigma-70 factor family. As to quaternary structure, interacts transiently with the RNA polymerase catalytic core.

In terms of biological role, sigma factors are initiation factors that promote the attachment of RNA polymerase to specific initiation sites and are then released. This is RNA polymerase principal sigma factor HrdC (hrdC) from Streptomyces coelicolor (strain ATCC BAA-471 / A3(2) / M145).